Here is a 1377-residue protein sequence, read N- to C-terminus: DNA-directed RNA polymerase subunit beta' (1377 aa).

Residues C60, C62, C75, and C78 each contribute to the Zn(2+) site. 3 residues coordinate Mg(2+): D449, D451, and D453. Residues C777, C851, C858, and C861 each contribute to the Zn(2+) site.

It belongs to the RNA polymerase beta' chain family. In terms of assembly, the RNAP catalytic core consists of 2 alpha, 1 beta, 1 beta' and 1 omega subunit. When a sigma factor is associated with the core the holoenzyme is formed, which can initiate transcription. Mg(2+) is required as a cofactor. The cofactor is Zn(2+).

It catalyses the reaction RNA(n) + a ribonucleoside 5'-triphosphate = RNA(n+1) + diphosphate. Functionally, DNA-dependent RNA polymerase catalyzes the transcription of DNA into RNA using the four ribonucleoside triphosphates as substrates. The protein is DNA-directed RNA polymerase subunit beta' of Borreliella afzelii (strain PKo) (Borrelia afzelii).